The chain runs to 32 residues: U3-ctenitoxin-Pk1a (32 aa).

3 disulfides stabilise this stretch: Cys-3–Cys-17, Cys-10–Cys-21, and Cys-16–Cys-30.

Belongs to the neurotoxin 17 (21C2) family. In terms of tissue distribution, expressed by the venom gland.

It localises to the secreted. In terms of biological role, may act as a neurotoxin. The protein is U3-ctenitoxin-Pk1a of Phoneutria keyserlingi (Brazilian wandering spider).